We begin with the raw amino-acid sequence, 110 residues long: Snake venom vascular endothelial growth factor toxin ICPP (110 aa).

A Pyrrolidone carboxylic acid modification is found at Q1. 3 disulfides stabilise this stretch: C14-C56, C45-C91, and C49-C93.

Homodimer; disulfide-linked. Interacts with high affinity with KDR/VEGFR-2, and with a lower affinity with neuropilin-1 (NRP1) and neuropilin-2 (NRP2). Expressed by the venom gland.

The protein resides in the secreted. Functionally, snake venom VEGFs may contribute to venom dispersion and prey subjugation by inducing vascular permeability and hypotension. This protein increases vascular permeability and angiogenesis probably through VEGF receptor (KDR/VEGFR-2) signaling. Induces DNA synthesis in human umbilical vein endothelial cells, and promotes mouse embryonic stem cell proliferation and differentiation. It may also induce a drastic hypotensive effect after intravenous injection. The hypotension is mediated by nitric oxide (NO), which is produced by VEGF-activated endothelium NO synthase. This chain is Snake venom vascular endothelial growth factor toxin ICPP, found in Macrovipera lebetinus (Levantine viper).